Reading from the N-terminus, the 485-residue chain is CUGBP Elav-like family member 5 (485 aa).

Residues 1 to 11 (MARLTESEARR) are compositionally biased toward basic and acidic residues. A disordered region spans residues 1-40 (MARLTESEARRQQQQLLQPRPSPVGSSGPEPPGGQPDGMK). Over residues 12–28 (QQQQLLQPRPSPVGSSG) the composition is skewed to low complexity. 3 RRM domains span residues 45–126 (IKLF…PADS), 134–214 (RKLF…FADT), and 400–478 (CNLF…LKRP).

The protein belongs to the CELF/BRUNOL family. As to expression, expressed in brain.

Its subcellular location is the nucleus. The protein resides in the cytoplasm. Its function is as follows. RNA-binding protein implicated in the regulation of pre-mRNA alternative splicing. Mediates exon inclusion and/or exclusion in pre-mRNA that are subject to tissue-specific and developmentally regulated alternative splicing. Specifically activates exon 5 inclusion of cardiac isoforms of TNNT2 during heart remodeling at the juvenile to adult transition. Binds to muscle-specific splicing enhancer (MSE) intronic sites flanking the alternative exon 5 of TNNT2 pre-mRNA. This chain is CUGBP Elav-like family member 5 (CELF5), found in Homo sapiens (Human).